Here is a 53-residue protein sequence, read N- to C-terminus: UPF0391 membrane protein Bcep18194_C7021 (53 aa).

2 consecutive transmembrane segments (helical) span residues 5–25 (AVIF…GIAA) and 30–50 (IAKI…LLGV).

Belongs to the UPF0391 family.

It is found in the cell membrane. This chain is UPF0391 membrane protein Bcep18194_C7021, found in Burkholderia lata (strain ATCC 17760 / DSM 23089 / LMG 22485 / NCIMB 9086 / R18194 / 383).